The sequence spans 161 residues: NADH-quinone oxidoreductase subunit I (161 aa).

2 consecutive 4Fe-4S ferredoxin-type domains span residues 52-82 and 92-121; these read LRRY…IESE and KRYD…ETRV. [4Fe-4S] cluster-binding residues include Cys62, Cys65, Cys68, Cys72, Cys101, Cys104, Cys107, and Cys111.

Belongs to the complex I 23 kDa subunit family. In terms of assembly, NDH-1 is composed of 14 different subunits. Subunits NuoA, H, J, K, L, M, N constitute the membrane sector of the complex. It depends on [4Fe-4S] cluster as a cofactor.

It localises to the cell inner membrane. It catalyses the reaction a quinone + NADH + 5 H(+)(in) = a quinol + NAD(+) + 4 H(+)(out). NDH-1 shuttles electrons from NADH, via FMN and iron-sulfur (Fe-S) centers, to quinones in the respiratory chain. The immediate electron acceptor for the enzyme in this species is believed to be ubiquinone. Couples the redox reaction to proton translocation (for every two electrons transferred, four hydrogen ions are translocated across the cytoplasmic membrane), and thus conserves the redox energy in a proton gradient. The polypeptide is NADH-quinone oxidoreductase subunit I (Aromatoleum aromaticum (strain DSM 19018 / LMG 30748 / EbN1) (Azoarcus sp. (strain EbN1))).